A 371-amino-acid chain; its full sequence is Putative glutamate--cysteine ligase 2 (371 aa).

This sequence belongs to the glutamate--cysteine ligase type 2 family. YbdK subfamily.

The catalysed reaction is L-cysteine + L-glutamate + ATP = gamma-L-glutamyl-L-cysteine + ADP + phosphate + H(+). Its function is as follows. ATP-dependent carboxylate-amine ligase which exhibits weak glutamate--cysteine ligase activity. The chain is Putative glutamate--cysteine ligase 2 from Burkholderia lata (strain ATCC 17760 / DSM 23089 / LMG 22485 / NCIMB 9086 / R18194 / 383).